The sequence spans 32 residues: Calichemicin antitumor antibiotic biosynthesis protein (32 aa).

The polypeptide is Calichemicin antitumor antibiotic biosynthesis protein (Micromonospora echinospora (Micromonospora purpurea)).